We begin with the raw amino-acid sequence, 739 residues long: Catalase-peroxidase 1 (739 aa).

A disordered region spans residues 1-33 (MPEDRPIEDSPPIGEAQTDAPAGGCPAGFGRIK). Residues 113–236 (WHAAGTYRVS…LAAVQMGLIY (124 aa)) constitute a cross-link (tryptophyl-tyrosyl-methioninium (Trp-Tyr) (with M-262)). The active-site Proton acceptor is the histidine 114. The tryptophyl-tyrosyl-methioninium (Tyr-Met) (with W-113) cross-link spans 236–262 (YVNPEGPNGNPDPQASAIDIRETFGRM). Residue histidine 277 participates in heme b binding.

It belongs to the peroxidase family. Peroxidase/catalase subfamily. Homodimer or homotetramer. Requires heme b as cofactor. Post-translationally, formation of the three residue Trp-Tyr-Met cross-link is important for the catalase, but not the peroxidase activity of the enzyme.

The enzyme catalyses H2O2 + AH2 = A + 2 H2O. It carries out the reaction 2 H2O2 = O2 + 2 H2O. Its function is as follows. Bifunctional enzyme with both catalase and broad-spectrum peroxidase activity. May play a role in the intracellular survival of mycobacteria. The polypeptide is Catalase-peroxidase 1 (Mycolicibacterium smegmatis (strain ATCC 700084 / mc(2)155) (Mycobacterium smegmatis)).